The chain runs to 400 residues: E3 ubiquitin-protein ligase RNF149 (400 aa).

The first 32 residues, 1–32 (MAWRRREASVGARGVLALALLALALCVPGARG), serve as a signal peptide directing secretion. N-linked (GlcNAc...) asparagine glycosylation is found at Asn52 and Asn145. The region spanning 67 to 175 (SSPKEGAHGL…PKGREILELV (109 aa)) is the PA domain. Residues 201–221 (VVFVAIAFITMMIISLAWLIF) form a helical membrane-spanning segment. The RING-type; atypical zinc finger occupies 269–310 (CAVCIENFKVKDIIRILPCKHIFHRICIDPWLLDHRTCPMCK). A disordered region spans residues 325–400 (DVQEMPAPES…SDSRHGGPIS (76 aa)). A Phosphoserine modification is found at Ser345. The segment covering 356–368 (DSSPPSASPAESE) has biased composition (low complexity). Positions 389 to 400 (GRSDSRHGGPIS) are enriched in basic and acidic residues.

The protein resides in the membrane. The enzyme catalyses S-ubiquitinyl-[E2 ubiquitin-conjugating enzyme]-L-cysteine + [acceptor protein]-L-lysine = [E2 ubiquitin-conjugating enzyme]-L-cysteine + N(6)-ubiquitinyl-[acceptor protein]-L-lysine.. Its pathway is protein modification; protein ubiquitination. E3 ubiquitin-protein ligase. Ubiquitinates BRAF, inducing its proteasomal degradation. This Homo sapiens (Human) protein is E3 ubiquitin-protein ligase RNF149 (RNF149).